Here is a 148-residue protein sequence, read N- to C-terminus: Transthyretin-like protein 2 (148 aa).

The N-terminal stretch at 1–17 (MSKYAILGLVLVGTVAS) is a signal peptide. The N-linked (GlcNAc...) asparagine glycan is linked to N77.

It belongs to the nematode transthyretin-like family.

It localises to the secreted. This chain is Transthyretin-like protein 2 (ttr-2), found in Caenorhabditis elegans.